The following is a 414-amino-acid chain: Ceramide synthase 5 (414 aa).

Over 1 to 43 (MATAAAETLGLLWGWLWSESFWLPQNVSWADLEGPGDGYGYPR) the chain is Lumenal. The N-linked (GlcNAc...) asparagine glycan is linked to N26. A helical membrane pass occupies residues 44 to 64 (AQHVLSVFPLAVCIFSVRMLF). The interval 75-136 (RVGIKDSPVN…RHRRNQDKPP (62 aa)) is homeobox-like. The TLC domain occupies 139 to 340 (TKFCESMWRF…IVQTASKALS (202 aa)). 4 helical membrane-spanning segments follow: residues 148 to 168 (FTYY…MPWF), 187 to 207 (LYYY…SQFI), 214 to 234 (FLMM…SYVN), and 272 to 292 (LFVI…PLWI). The Last loop motif signature appears at 299 to 309 (ESWEIIGPYPS). The helical transmembrane segment at 312–332 (LFNALLLILQVLHAIWSYLIV) threads the bilayer. The Cytoplasmic segment spans residues 333 to 414 (QTASKALSRG…RASPHLHSCD (82 aa)). Residues 347-373 (DDRSDVESSSEEEDETTHKNNLSGSSS) are disordered.

In terms of assembly, interacts with PAQR4; the interaction regulates the stability and activity of CERS5 and is inhibited in presence of ceramides. In terms of processing, phosphorylated at the C-terminus by CK2. Ubiquitously expressed, with highest levels in testis and kidney. Expressed in pulmonary epithelia.

The protein resides in the endoplasmic reticulum membrane. It carries out the reaction a sphingoid base + hexadecanoyl-CoA = an N-hexadecanoyl-sphingoid base + CoA + H(+). The catalysed reaction is sphinganine + hexadecanoyl-CoA = N-hexadecanoylsphinganine + CoA + H(+). The enzyme catalyses hexadecasphinganine + hexadecanoyl-CoA = N-hexadecanoylhexadecasphinganine + CoA + H(+). It catalyses the reaction sphing-4-enine + hexadecanoyl-CoA = N-hexadecanoylsphing-4-enine + CoA + H(+). It carries out the reaction 2-hydroxyhexadecanoyl-CoA + sphinganine = N-(2-hydroxyhexadecanoyl)-sphinganine + CoA + H(+). The catalysed reaction is sphinganine + tetradecanoyl-CoA = N-(tetradecanoyl)-sphinganine + CoA + H(+). The enzyme catalyses sphinganine + octadecanoyl-CoA = N-(octadecanoyl)-sphinganine + CoA + H(+). It catalyses the reaction sphinganine + (9Z)-octadecenoyl-CoA = N-(9Z-octadecenoyl)-sphinganine + CoA + H(+). It carries out the reaction a fatty acyl-CoA + sphing-4-enine = an N-acylsphing-4-enine + CoA + H(+). The catalysed reaction is tetracosenoyl-CoA + sphing-4-enine = N-(tetracosenoyl)-sphing-4-enine + CoA + H(+). It functions in the pathway lipid metabolism; sphingolipid metabolism. With respect to regulation, inhibited by fumonisin B1. In terms of biological role, ceramide synthase that catalyzes the transfer of the acyl chain from acyl-CoA to a sphingoid base, with high selectivity toward palmitoyl-CoA (hexadecanoyl-CoA; C16:0-CoA). Can use other acyl donors, but with less efficiency. N-acylates sphinganine and sphingosine bases to form dihydroceramides and ceramides in de novo synthesis and salvage pathways, respectively. Plays a role in de novo ceramide synthesis and surfactant homeostasis in pulmonary epithelia. The polypeptide is Ceramide synthase 5 (Mus musculus (Mouse)).